Consider the following 529-residue polypeptide: Cytokinin dehydrogenase 4 (529 aa).

The N-terminal stretch at 1–27 (MRGAMKPSIVHCLKLLMLLALGGVTMH) is a signal peptide. Residues 63–244 (CSLLPAAVLH…TRARIALEPA (182 aa)) enclose the FAD-binding PCMH-type domain. FAD contacts are provided by A99, G101, and G103. H104 is modified (pros-8alpha-FAD histidine). The FAD site is built by S105, Q109, D168, T173, S179, V183, and I234. N285, N419, and N425 each carry an N-linked (GlcNAc...) asparagine glycan. Residues Y479 and Q517 each coordinate FAD.

The protein belongs to the oxygen-dependent FAD-linked oxidoreductase family. In terms of assembly, monomer. It depends on FAD as a cofactor. Expressed in inflorescence meristems.

The protein localises to the secreted. It is found in the extracellular space. The catalysed reaction is N(6)-dimethylallyladenine + A + H2O = 3-methyl-2-butenal + adenine + AH2. Catalyzes the oxidation of cytokinins, a family of N(6)-substituted adenine derivatives that are plant hormones, where the substituent is an isopentenyl group. This Oryza sativa subsp. japonica (Rice) protein is Cytokinin dehydrogenase 4 (CKX4).